The primary structure comprises 164 residues: UPF0251 protein MA_0157 (164 aa).

A disordered region spans residues 91–124 (GDYRMPRGDGTGPAGQGPVGGGRSRGQGKGRGGR). The segment covering 99-115 (DGTGPAGQGPVGGGRSR) has biased composition (gly residues).

Belongs to the UPF0251 family.

This chain is UPF0251 protein MA_0157, found in Methanosarcina acetivorans (strain ATCC 35395 / DSM 2834 / JCM 12185 / C2A).